A 279-amino-acid polypeptide reads, in one-letter code: Prostatic spermine-binding protein (279 aa).

A signal peptide spans 1–17 (MLLLVTLALLAGPTCRA). Q18 is modified (pyrrolidone carboxylic acid). A Jacalin-type lectin domain is found at 18–151 (QNILGNNVGT…LNGMGFKWKN (134 aa)). N-linked (GlcNAc...) asparagine glycosylation occurs at N62. Acidic residues-rich tracts occupy residues 160–177 (DDDK…NEED) and 185–279 (NDHD…EEEE). The tract at residues 160–279 (DDDKEDDDDE…DDDNGDEEEE (120 aa)) is disordered.

It to mouse SBP. Prostate.

In terms of biological role, spermine-binding protein is an androgen regulated ventral prostate glycoprotein that binds various polyamines. In Rattus norvegicus (Rat), this protein is Prostatic spermine-binding protein (Sbp).